The following is a 242-amino-acid chain: Venom nerve growth factor 1 (242 aa).

Positions 1-18 (MSMLCYTLIIAFLIGIWA) are cleaved as a signal peptide. A propeptide spanning residues 19-125 (APQSEDNVPL…ALNRNIQAKR (107 aa)) is cleaved from the precursor. 3 disulfides stabilise this stretch: C139–C203, C181–C231, and C191–C233.

It belongs to the NGF-beta family. As to quaternary structure, homodimer; non-covalently linked. Expressed by the venom gland.

Its subcellular location is the secreted. In terms of biological role, nerve growth factor is important for the development and maintenance of the sympathetic and sensory nervous systems. It stimulates division and differentiation of sympathetic and embryonic sensory neurons as well as basal forebrain cholinergic neurons in the brain. Its relevance in the snake venom is not clear. However, it has been shown to inhibit metalloproteinase-dependent proteolysis of platelet glycoprotein Ib alpha, suggesting a metalloproteinase inhibition to prevent metalloprotease autodigestion and/or protection against prey proteases. Binds a lipid between the two protein chains in the homodimer. The lipid-bound form promotes histamine relase from mouse mast cells, contrary to the lipid-free form. In Pseudechis australis (Mulga snake), this protein is Venom nerve growth factor 1.